The chain runs to 86 residues: Small ribosomal subunit protein bS16 (86 aa).

Belongs to the bacterial ribosomal protein bS16 family.

This chain is Small ribosomal subunit protein bS16, found in Nostoc punctiforme (strain ATCC 29133 / PCC 73102).